Consider the following 466-residue polypeptide: Adenosylhomocysteinase (466 aa).

3 residues coordinate substrate: Thr57, Asp132, and Glu192. Residue 193-195 coordinates NAD(+); it reads TTT. Substrate-binding residues include Lys222 and Asp226. NAD(+)-binding positions include Asn227, 256–261, Glu279, Asn314, 335–337, and Asn380; these read GYGDVG and IGH.

This sequence belongs to the adenosylhomocysteinase family. Requires NAD(+) as cofactor.

It localises to the cytoplasm. The catalysed reaction is S-adenosyl-L-homocysteine + H2O = L-homocysteine + adenosine. Its pathway is amino-acid biosynthesis; L-homocysteine biosynthesis; L-homocysteine from S-adenosyl-L-homocysteine: step 1/1. Its function is as follows. May play a key role in the regulation of the intracellular concentration of adenosylhomocysteine. This chain is Adenosylhomocysteinase, found in Brucella anthropi (strain ATCC 49188 / DSM 6882 / CCUG 24695 / JCM 21032 / LMG 3331 / NBRC 15819 / NCTC 12168 / Alc 37) (Ochrobactrum anthropi).